A 270-amino-acid polypeptide reads, in one-letter code: 4-hydroxy-tetrahydrodipicolinate reductase (270 aa).

Residues 11–16 and glutamate 37 each bind NAD(+); that span reads GCNGRM. NADP(+) is bound at residue arginine 38. Residues 101-103 and 125-128 each bind NAD(+); these read GTT and ASNY. The Proton donor/acceptor role is filled by histidine 158. Histidine 159 lines the (S)-2,3,4,5-tetrahydrodipicolinate pocket. The Proton donor role is filled by lysine 162. 168 to 169 serves as a coordination point for (S)-2,3,4,5-tetrahydrodipicolinate; it reads GT.

Belongs to the DapB family.

The protein localises to the cytoplasm. It carries out the reaction (S)-2,3,4,5-tetrahydrodipicolinate + NAD(+) + H2O = (2S,4S)-4-hydroxy-2,3,4,5-tetrahydrodipicolinate + NADH + H(+). The catalysed reaction is (S)-2,3,4,5-tetrahydrodipicolinate + NADP(+) + H2O = (2S,4S)-4-hydroxy-2,3,4,5-tetrahydrodipicolinate + NADPH + H(+). It functions in the pathway amino-acid biosynthesis; L-lysine biosynthesis via DAP pathway; (S)-tetrahydrodipicolinate from L-aspartate: step 4/4. Catalyzes the conversion of 4-hydroxy-tetrahydrodipicolinate (HTPA) to tetrahydrodipicolinate. The protein is 4-hydroxy-tetrahydrodipicolinate reductase of Aeromonas salmonicida (strain A449).